We begin with the raw amino-acid sequence, 495 residues long: Histidine--tRNA ligase (495 aa).

Residues 1 to 10 (MTTDSEQPNT) are compositionally biased toward polar residues. Residues 1–24 (MTTDSEQPNTDFRPEARAPRGFAD) form a disordered region. The segment covering 12-24 (FRPEARAPRGFAD) has biased composition (basic and acidic residues).

It belongs to the class-II aminoacyl-tRNA synthetase family. Homodimer.

Its subcellular location is the cytoplasm. It catalyses the reaction tRNA(His) + L-histidine + ATP = L-histidyl-tRNA(His) + AMP + diphosphate + H(+). The chain is Histidine--tRNA ligase (hisS) from Caulobacter vibrioides (strain ATCC 19089 / CIP 103742 / CB 15) (Caulobacter crescentus).